We begin with the raw amino-acid sequence, 873 residues long: Zinc fingers and homeoboxes protein 1 (873 aa).

The disordered stretch occupies residues 24–63; the sequence is LISDLDEGPPVLTPVENTRAESISSDEEVHESVDSDNQQN. The residue at position 36 (Thr36) is a Phosphothreonine. Phosphoserine occurs at positions 45, 47, and 48. 2 C2H2-type zinc fingers span residues 70 to 93 and 102 to 125; these read YECKYCTFQTPDLNMFTFHVDSEH and YVCVECNFLTKRYDALSEHNLKYH. Lys159 participates in a covalent cross-link: Glycyl lysine isopeptide (Lys-Gly) (interchain with G-Cter in SUMO2). Phosphoserine is present on Ser202. The interval 202–236 is disordered; sequence SVEDVPEEKENEIKPDREEIVENPSSSASESNTST. The span at 212–221 shows a compositional bias: basic and acidic residues; it reads NEIKPDREEI. The span at 223–236 shows a compositional bias: low complexity; that stretch reads ENPSSSASESNTST. A required for dimerization region spans residues 272-432; it reads NSNLIPKVLI…QNNIQKSQVP (161 aa). The tract at residues 272 to 564 is required for interaction with NFYA; that stretch reads NSNLIPKVLI…AQPKQSWNPF (293 aa). Residues 284–346 constitute a DNA-binding region (homeobox 1); the sequence is NSIPTYNAAL…LKHGVSWTPE (63 aa). Residues Lys441, Lys454, Lys485, and Lys629 each participate in a glycyl lysine isopeptide (Lys-Gly) (interchain with G-Cter in SUMO2) cross-link. DNA-binding regions (homeobox) lie at residues 464–526 and 569–630; these read SFGI…KSNQ and PQKF…EEKM. Disordered stretches follow at residues 626 to 667 and 732 to 770; these read KEEK…ICKK and SSMNGLSSLRKRGRGRPKGRGRGRPRGRPRGSKRINNWD. Ser648 is modified (phosphoserine). The homeobox 4 DNA-binding region spans 660–722; that stretch reads STGKICKKTP…YAWKNGNLKW (63 aa). Residues 734–768 form a required for nuclear localization region; that stretch reads MNGLSSLRKRGRGRPKGRGRGRPRGRPRGSKRINN. Residues 740–764 are compositionally biased toward basic residues; sequence LRKRGRGRPKGRGRGRPRGRPRGSK. Phosphoserine is present on Ser774. A DNA-binding region (homeobox 5) is located at residues 777 to 832; the sequence is KFKTGTAILKDYYLKHKFLNEQDLDELVNKSHMGYEQVREWFAERQRRSELGIELF. The disordered stretch occupies residues 829 to 873; sequence IELFEENEEEDEVIDDQEEDEEETDDSDTWEPPRHVKRKLSKSDD. Acidic residues predominate over residues 831 to 857; the sequence is LFEENEEEDEVIDDQEEDEEETDDSDT. The required for repressor activity stretch occupies residues 831-873; the sequence is LFEENEEEDEVIDDQEEDEEETDDSDTWEPPRHVKRKLSKSDD. The segment covering 863 to 873 has biased composition (basic residues); that stretch reads HVKRKLSKSDD.

This sequence belongs to the ZHX family. Forms homodimers. Heterodimer (via HD1 domain) with ZHX2 (via HD1 domain). Also forms a heterodimer with ZHX3 which is a prerequisite for repressor activity. Interacts with ATF7IP and NFYA. Interacts (via homeobox domains) with DNMT3B (via PWWP domain). As to expression, ubiquitously expressed. Expressed in podocytes.

It localises to the nucleus. In terms of biological role, acts as a transcriptional repressor. Increases DNMT3B-mediated repressive transcriptional activity when DNMT3B is tethered to DNA. May link molecule between DNMT3B and other co-repressor proteins. This is Zinc fingers and homeoboxes protein 1 (ZHX1) from Homo sapiens (Human).